Reading from the N-terminus, the 272-residue chain is Putative pyruvate, phosphate dikinase regulatory protein (272 aa).

ADP is bound at residue 151–158 (GISRTSKT).

This sequence belongs to the pyruvate, phosphate/water dikinase regulatory protein family. PDRP subfamily.

The enzyme catalyses N(tele)-phospho-L-histidyl/L-threonyl-[pyruvate, phosphate dikinase] + ADP = N(tele)-phospho-L-histidyl/O-phospho-L-threonyl-[pyruvate, phosphate dikinase] + AMP + H(+). It carries out the reaction N(tele)-phospho-L-histidyl/O-phospho-L-threonyl-[pyruvate, phosphate dikinase] + phosphate + H(+) = N(tele)-phospho-L-histidyl/L-threonyl-[pyruvate, phosphate dikinase] + diphosphate. Functionally, bifunctional serine/threonine kinase and phosphorylase involved in the regulation of the pyruvate, phosphate dikinase (PPDK) by catalyzing its phosphorylation/dephosphorylation. This chain is Putative pyruvate, phosphate dikinase regulatory protein, found in Staphylococcus aureus (strain USA300).